The following is a 1357-amino-acid chain: DNA-directed RNA polymerase subunit beta (1357 aa).

Belongs to the RNA polymerase beta chain family. The RNAP catalytic core consists of 2 alpha, 1 beta, 1 beta' and 1 omega subunit. When a sigma factor is associated with the core the holoenzyme is formed, which can initiate transcription.

It catalyses the reaction RNA(n) + a ribonucleoside 5'-triphosphate = RNA(n+1) + diphosphate. Functionally, DNA-dependent RNA polymerase catalyzes the transcription of DNA into RNA using the four ribonucleoside triphosphates as substrates. The sequence is that of DNA-directed RNA polymerase subunit beta from Pseudomonas paraeruginosa (strain DSM 24068 / PA7) (Pseudomonas aeruginosa (strain PA7)).